Reading from the N-terminus, the 316-residue chain is MLSESSSFLKGVMLGSIFCALITMLGHIRIGNRMHHHEHHHLQAPNKDDISKISEAERMELSKSFRVYCIVLVKPKDVSLWAAVKETWTKHCDKAEFFSSENVKVFESINMDTNDMWLMMRKAYKYAYDQYRDQYNWFFLARPTTFAVIENLKYFLLKKDQSQPFYLGHTVKSGDLEYVSVDGGIVLSIESMKRLNSLLSVPEKCPEQGGMIWKISEDKQLAVCLKYAGVFAENAEDADGKDVFNTKSVGLFIKEAMTNQPNQVVEGCCSDMAVTFNGLTPNQMHVMMYGVYRLRAFGHVFNDALVFLPPNGSEND.

At 1 to 6 (MLSESS) the chain is on the cytoplasmic side. A helical; Signal-anchor for type II membrane protein transmembrane segment spans residues 7–26 (SFLKGVMLGSIFCALITMLG). At 27–316 (HIRIGNRMHH…FLPPNGSEND (290 aa)) the chain is on the lumenal side.

It belongs to the glycosyltransferase 31 family. Beta3-Gal-T subfamily. In terms of assembly, associates with core 1 beta-3-galactosyltransferase (C1GALT1), probably not with the soluble active form.

It localises to the membrane. Probable chaperone required for the generation of 1 O-glycan Gal-beta1-3GalNAc-alpha1-Ser/Thr (T antigen), which is a precursor for many extended O-glycans in glycoproteins. Probably acts as a specific molecular chaperone assisting the folding/stability of core 1 beta-3-galactosyltransferase (C1GALT1). The chain is C1GALT1-specific chaperone 1 (C1galt1c1) from Mus musculus (Mouse).